The following is a 204-amino-acid chain: Probable GTP-binding protein EngB (204 aa).

The EngB-type G domain maps to 22-197; it reads GFPEIAFVGR…LAEFDNVLSI (176 aa). GTP is bound by residues 30-37, 57-61, 75-78, 144-147, and 176-178; these read GRSNVGKS, GKTRQ, DLPG, NKVD, and FSA. Ser-37 and Thr-59 together coordinate Mg(2+).

The protein belongs to the TRAFAC class TrmE-Era-EngA-EngB-Septin-like GTPase superfamily. EngB GTPase family. It depends on Mg(2+) as a cofactor.

Necessary for normal cell division and for the maintenance of normal septation. In Ruminiclostridium cellulolyticum (strain ATCC 35319 / DSM 5812 / JCM 6584 / H10) (Clostridium cellulolyticum), this protein is Probable GTP-binding protein EngB.